The chain runs to 171 residues: MEELKSIIRDIPDFPKKGIIFKDITTLLSDAASYQRMIDLLSHRYIGKRIDKVVGVEARGFIIGAALAYKLGAGIVLVRKPGKLPSETFKKTYDLEYGTDTLEMHTDAIKKGERVLIADDLLATGGTMSAVVDMVDSMGGELVECCFMAELEFLNGRTKLPVERVFSLLKF.

This sequence belongs to the purine/pyrimidine phosphoribosyltransferase family. As to quaternary structure, homodimer.

The protein resides in the cytoplasm. It catalyses the reaction AMP + diphosphate = 5-phospho-alpha-D-ribose 1-diphosphate + adenine. The protein operates within purine metabolism; AMP biosynthesis via salvage pathway; AMP from adenine: step 1/1. Catalyzes a salvage reaction resulting in the formation of AMP, that is energically less costly than de novo synthesis. This Geotalea daltonii (strain DSM 22248 / JCM 15807 / FRC-32) (Geobacter daltonii) protein is Adenine phosphoribosyltransferase.